The following is a 1342-amino-acid chain: MVYSYTEKKRIRKDFGKRPQVLDIPYLLSIQLDSFQKFIEQDPEGQYGLEAAFRSVFPIQSYSGNSELQYVSYRLGEPVFDVKECQIRGVTFSAPLRVKLRLVIYEREAPEGTVKDIKEQEVYMGEIPLMTDNGTFVINGTERVIVSQLHRSPGVFFDSDKGKTHSSGKVLYNARIIPYRGSWLDFEFDPKDNLFVRIDRRRKLPATIILRALSYTTEQILDLFFEKVIYQIRDNKLQMELVPERLRGETASFDIESNGTVYVEKGRRITARHIRQLEKDAVAHIEVPVEYIAGKVVAKDYIDESTGELLIAANMELSLDLLAKLSQSGHKRIETLFTNDLDHGPYISETVRVDPTSDRLSALVEIYRMMRPGEPPTREAAENLFENLFFSEDRYDLSAVGRMKFNRSLLRDEIEGSGILSKDDIIQVMKKLIGIRNGIGEVDDIDHLGNRRIRSVGEMAENQFRVGLVRVERAVKERLSLGDLDTLMPQDMINAKPISAAVKEFFGSSQLSQFMDQNNPLSEITHKRRISALGPGGLTRERAGFEVRDVHPTHYGRVCPIETPEGPNIGLINSLSVYAQTNEYGFLETPYRRVRDGVVTDEIHYLSAIEEGNYVIAQANTNLDDEGHFVDDLVTCRSKGESSLFSRDQVDYMDVSTQQVVSVGASLIPFLEHDDANRALMGANMQRQAVPTLRADKPLVGTGMERAVAVDSGVTAVAKRGGTVQYVDASRIVIKVNEDEMYPGEAGIDIYNLTKYTRSNQNTCINQMPCVNLGEPIERGDVLADGPSTDLGELALGQNMRVAFMPWNGYNFEDSILVSERVVQEDRFTTIHIQELACVSRDTKLGPEEITADIPNVGEAALSKLDESGIVYIGAEVTGGDILVGKVTPKGETQLTPEEKLLRAIFGEKASDVKDSSLRVPNGVSGTVIDVQVFTRDGVEKDKRALEIEEMQLKQAKKDLSEELQILEAGLFSRINYLLVAGGIEAEKLDKLPRERWLELGLSDEDKQNQLEQLAEQYDELKHEFEKKLDAKRRKITQGDDLAPGVLKIVKVYLAVKRQIQPGDKMAGRHGNKGVISKINPIEDMPYDENGTPVDIVLNPLGVPSRMNIGQILETHLGMAAKGIGEKINAMLKKQEEVSKLREFIQRAYDLGTDVRQKVDLNTFTDDEVLRLAENLKKGMPIATPVFDGAKESEIKELLQLGGLPSSGQITLFDGRTGEQFERQVTVGYMYMLKLNHLVDDKMHARSTGSYSLVTQQPLGGKAQFGGQRFGEMEVWALEAYGAAYTLQEMLTVKSDDVNGRTKMYKNIVDGNHQMEPGMPESFNVLLKEIRSLGINIELEDE.

Belongs to the RNA polymerase beta chain family. In terms of assembly, the RNAP catalytic core consists of 2 alpha, 1 beta, 1 beta' and 1 omega subunit. When a sigma factor is associated with the core the holoenzyme is formed, which can initiate transcription.

The enzyme catalyses RNA(n) + a ribonucleoside 5'-triphosphate = RNA(n+1) + diphosphate. DNA-dependent RNA polymerase catalyzes the transcription of DNA into RNA using the four ribonucleoside triphosphates as substrates. In Erwinia tasmaniensis (strain DSM 17950 / CFBP 7177 / CIP 109463 / NCPPB 4357 / Et1/99), this protein is DNA-directed RNA polymerase subunit beta.